Reading from the N-terminus, the 553-residue chain is Terpene synthase 16 (553 aa).

3 residues coordinate Mg(2+): Asp303, Asp307, and Glu457. Residues Asp303–Asp307 carry the DDXXD motif motif.

The protein belongs to the terpene synthase family. Tpsa subfamily. The cofactor is Mg(2+). It depends on Mn(2+) as a cofactor. Expressed in leaves, trichomes and flowers.

Its pathway is secondary metabolite biosynthesis; terpenoid biosynthesis. Its function is as follows. Sesquiterpene synthase involved in the biosynthesis of volatile compounds. No activity detected with geranyl diphosphate (GPP) and farnesyl diphosphate (FPP) as substrates. The sequence is that of Terpene synthase 16 from Solanum lycopersicum (Tomato).